A 379-amino-acid chain; its full sequence is Alkanesulfonate monooxygenase (379 aa).

Belongs to the SsuD family.

The enzyme catalyses an alkanesulfonate + FMNH2 + O2 = an aldehyde + FMN + sulfite + H2O + 2 H(+). In terms of biological role, catalyzes the desulfonation of aliphatic sulfonates. This Pseudomonas syringae pv. tomato (strain ATCC BAA-871 / DC3000) protein is Alkanesulfonate monooxygenase.